Here is a 412-residue protein sequence, read N- to C-terminus: Aurora kinase (412 aa).

Residues N94–A119 are disordered. The region spanning F148–I401 is the Protein kinase domain. Residues L154 to V162 and K177 each bind ATP. D271 acts as the Proton acceptor in catalysis.

The protein belongs to the protein kinase superfamily. Ser/Thr protein kinase family. Aurora subfamily.

It is found in the nucleus. It localises to the cytoplasm. Its subcellular location is the cytoskeleton. The protein resides in the spindle. The protein localises to the chromosome. It is found in the centromere. It localises to the kinetochore. The catalysed reaction is L-seryl-[protein] + ATP = O-phospho-L-seryl-[protein] + ADP + H(+). The enzyme catalyses L-threonyl-[protein] + ATP = O-phospho-L-threonyl-[protein] + ADP + H(+). Component of the chromosomal passenger complex (CPC), a complex that acts as a key regulator of chromosome segregation and cytokinesis. Has a role in error-correction of aberrent kinetochore-microtubule attachments to ensure that sister kinetochores become bioriented and connect to opposite poles by promoting spindle assembly checkpoint signaling. The sequence is that of Aurora kinase (IPL1) from Debaryomyces hansenii (strain ATCC 36239 / CBS 767 / BCRC 21394 / JCM 1990 / NBRC 0083 / IGC 2968) (Yeast).